Consider the following 293-residue polypeptide: Diaminopimelate epimerase (293 aa).

3 residues coordinate substrate: asparagine 17, glutamine 47, and asparagine 67. Residue cysteine 76 is the Proton donor of the active site. Substrate contacts are provided by residues 77–78 (GN), asparagine 164, asparagine 197, and 215–216 (ER). The Proton acceptor role is filled by cysteine 224. A substrate-binding site is contributed by 225–226 (GS).

This sequence belongs to the diaminopimelate epimerase family. Homodimer.

It is found in the cytoplasm. It catalyses the reaction (2S,6S)-2,6-diaminopimelate = meso-2,6-diaminopimelate. Its pathway is amino-acid biosynthesis; L-lysine biosynthesis via DAP pathway; DL-2,6-diaminopimelate from LL-2,6-diaminopimelate: step 1/1. Its function is as follows. Catalyzes the stereoinversion of LL-2,6-diaminopimelate (L,L-DAP) to meso-diaminopimelate (meso-DAP), a precursor of L-lysine and an essential component of the bacterial peptidoglycan. The polypeptide is Diaminopimelate epimerase (Rhodopseudomonas palustris (strain TIE-1)).